Here is a 647-residue protein sequence, read N- to C-terminus: Chaperone protein DnaK (647 aa).

Residue Thr198 is modified to Phosphothreonine; by autocatalysis. 3 stretches are compositionally biased toward basic and acidic residues: residues 514 to 529 (AEANKEEDKKKRESVD), 540 to 557 (STEKNLKEHGAKVSDADK), and 600 to 622 (SQEKKEGSPKEGDKNDEGKKDDN). 2 disordered regions span residues 514-557 (AEAN…DADK) and 596-647 (AIYK…EKSA). Positions 623 to 632 (VVDADFEEVK) are enriched in acidic residues. Basic and acidic residues predominate over residues 633–647 (EESKEGKEEDKEKSA).

This sequence belongs to the heat shock protein 70 family.

Functionally, acts as a chaperone. This chain is Chaperone protein DnaK, found in Pelagibacter ubique (strain HTCC1062).